A 283-amino-acid polypeptide reads, in one-letter code: MNTVKTVQELRAAVARARSEGKRIALTPTMGNLHSGHAALVAKAAQRADFVVATIFINPLQFGPNEDLATYPRTLAADQEKLLQAGCNLLFTPSVEEMYPHGMADQTLVSVPHLSQGLCGASRPGHFEGVATVVSKLFNMVQPDLAIFGEKDFQQLAVIRAMVRDLNMPIQIIGEPTVRAEDGLALSSRNGYLNEAQRAAAPALYQAIRQTADAISAGEQDFDALLTSKKQQLEAAGFRIDYLEIRDATSLRPTTAENRDVVILAAAFLGKTRLIDNLHLTRS.

30-37 (MGNLHSGH) contributes to the ATP binding site. The active-site Proton donor is H37. (R)-pantoate is bound at residue Q61. Q61 lines the beta-alanine pocket. 149–152 (GEKD) is a binding site for ATP. Q155 lines the (R)-pantoate pocket. Residues V178 and 186 to 189 (LSSR) each bind ATP.

This sequence belongs to the pantothenate synthetase family. In terms of assembly, homodimer.

The protein resides in the cytoplasm. It carries out the reaction (R)-pantoate + beta-alanine + ATP = (R)-pantothenate + AMP + diphosphate + H(+). It participates in cofactor biosynthesis; (R)-pantothenate biosynthesis; (R)-pantothenate from (R)-pantoate and beta-alanine: step 1/1. Functionally, catalyzes the condensation of pantoate with beta-alanine in an ATP-dependent reaction via a pantoyl-adenylate intermediate. The polypeptide is Pantothenate synthetase (Pseudomonas savastanoi pv. phaseolicola (strain 1448A / Race 6) (Pseudomonas syringae pv. phaseolicola (strain 1448A / Race 6))).